Here is a 55-residue protein sequence, read N- to C-terminus: Large ribosomal subunit protein bL33 (55 aa).

Belongs to the bacterial ribosomal protein bL33 family.

The protein is Large ribosomal subunit protein bL33 of Xanthomonas oryzae pv. oryzae (strain PXO99A).